A 5495-amino-acid chain; its full sequence is Microtubule-associated protein futsch (5495 aa).

Disordered stretches follow at residues 1 to 97, 656 to 975, 988 to 1074, 1086 to 1111, 1128 to 1167, 1185 to 1204, 1255 to 1275, 1306 to 1358, 1402 to 1840, 1866 to 2631, 2709 to 2810, 2830 to 4166, 4196 to 4230, 4362 to 4612, 4636 to 4668, 4687 to 4975, 5035 to 5065, 5101 to 5138, 5170 to 5199, and 5328 to 5350; these read MGDQ…DADG, AKAD…LKEE, RDEM…AEEE, ERKARLEGASARQDESELDVEPEQSK, KSRTEEQLAKPAEEELSSPTPEEKLSKKTSDTKDDQIGAP, SATIESGATTAPTLPEDERI, KDAPKDANAEALGELPDSGER, HEEA…EPNK, NQED…VVES, EIGK…PGFV, AKTV…KDFA, LPTL…DLSL, KAESSPRPAVLSKPAEFSQPDTGHTASTPVDEASP, IIPD…ASQL, AQKSNKEIKDARETKVTSQFTTTTSSATKDDSL, AFST…QMLA, KTVTTTDSSEPDSEKVVVTTTRTTSESERDQ, SYELQHSSSGVSKRSDLDADGDESQDDIPPQYGSEEHS, PSTEPIPIQGAPSGDSQSSESVESSSQTWA, and GLPSPAPLPVEGGADIRTTPKKE. A compositionally biased stretch (low complexity) spans 35–48; that stretch reads AKGAGDGPAQDAAQ. 3 stretches are compositionally biased toward basic and acidic residues: residues 656 to 672, 696 to 716, and 758 to 795; these read AKADSMDTDAEPEHEAD, EPEHEPEAEQDKDVGEEKKVE, and GKADKPRAEVKPVVRSRIDTKPPKSMDRKLAKRDEKKS. Low complexity-rich tracts occupy residues 797-806 and 819-831; these read PTTTPAARAP and PATKSSPSSTPAK. The segment covering 832 to 843 has biased composition (basic and acidic residues); sequence SAKEANNRKVLE. A compositionally biased stretch (low complexity) spans 850-888; it reads RVQATSTVSRRVTSTASERRVQQQAEAKTAATGATQATQ. Residues 918–931 are compositionally biased toward basic and acidic residues; it reads KAADLKKTRLDKGG. Residues 932 to 942 are compositionally biased toward polar residues; the sequence is TTDSSLVSTPS. Composition is skewed to basic and acidic residues over residues 962 to 975 and 988 to 1007; these read DAEKQRELDDLKEE and RDEMKRQQHQQIKAELREMP. The span at 1012–1041 shows a compositional bias: acidic residues; that stretch reads GDGENEPDEEEEYLIIEKEEVEQYTEDSIV. Residues 1047-1065 are compositionally biased toward basic and acidic residues; sequence MTKEEEIQKHQRDSQESEK. Basic and acidic residues-rich tracts occupy residues 1128–1140 and 1148–1163; these read KSRTEEQLAKPAE and PEEKLSKKTSDTKDDQ. Residues 1187–1196 show a composition bias toward polar residues; that stretch reads TIESGATTAP. Composition is skewed to basic and acidic residues over residues 1306 to 1319, 1327 to 1337, 1343 to 1358, and 1408 to 1443; these read HEEADLGLYEKDSQ, SHKEESAKEEK, KENKVGEIELGDEPNK, and EQVKDKEEHEQKIESGIITEKEAKKSASTPEEKETS. Repeat copies occupy residues 1469-1502 and 1513-1539. The 53 X approximate repeat stretch occupies residues 1469–4032; sequence REDTGSIESP…SPLASKESSR (2564 aa). Basic and acidic residues-rich tracts occupy residues 1546-1555, 1571-1663, 1679-1696, 1718-1732, and 1748-1779; these read PESEAKDKKS, SVKD…DEKS, SVKDETEKSKEPSRRESI, GIKDESAKPESRRDS, and SVKDEPIKSTEKSRRESVAESFKADSTKDEKS. A run of 17 repeats spans residues 1622–1649, 1660–1686, 1690–1718, 1755–1782, 1790–1818, 1837–1865, 1874–1902, 1911–1939, 1948–1976, 1985–2013, 2022–2050, 2059–2087, 2096–2124, 2133–2161, 2170–2198, 2215–2243, and 2262–2292. The span at 1804–1815 shows a compositional bias: polar residues; that stretch reads ERSQPESVTASR. Composition is skewed to basic and acidic residues over residues 1887–1896, 1904–1942, 1960–1976, 1994–2007, 2041–2059, 2078–2096, 2115–2133, 2152–2170, 2189–2207, 2226–2244, 2263–2281, 2300–2318, 2337–2355, 2374–2391, 2419–2435, 2466–2482, 2560–2588, and 2604–2627; these read VKPESRRESS, HAEDSKEPSRPESKVECLKDESEVLKGSTRRESVAESDK, MKDESMSKEPSRRESVK, SAKDGADDLKELSR, SVKDEAEKSKEESRRESVA, SIKDEAEKSKEESRRESVA, SIKDEAEKSKEETRRESVA, SIKDEAEKSKEESRRESAA, SVKDEADKSKEESRRESM, SVKDDPVKSKEPSRRES, SVKDEAEKQESRRESKT, IKYDLDKPQIIKDDKSTEHSRRESLEDKS, and SDHEAAVAIEDDAKSSISPKDKSR. The stretch at 2355-2391 is repeat 20; it reads AEKSPLPSKEASRPASVAESVKDEADKSKEESRRESM. 2 tandem repeats follow at residues 2703-2726 and 2761-2787. The segment covering 2764-2780 has biased composition (basic and acidic residues); the sequence is ESKDDAAQLKSSVEDLR. Ser2800 carries the post-translational modification Phosphoserine; by GSK3-beta. A run of 3 repeats spans residues 2820-2846, 2864-2892, and 2907-2933. Residues 2845–2861 show a composition bias toward low complexity; that stretch reads PQTSTPTSSPTVASVQP. Basic and acidic residues-rich tracts occupy residues 2889 to 2914 and 2942 to 2954; these read AEERPESPAESAKDAAESVEKSKDAS and GPKDDVEKSKESS. Polar residues predominate over residues 2955–2966; it reads RPPSVSASITGD. 28 consecutive repeat copies span residues 2956–2987, 3006–3034, 3049–3075, 3089–3117, 3131–3158, 3200–3224, 3228–3256, 3265–3293, 3302–3330, 3339–3367, 3376–3404, 3413–3441, 3450–3478, 3487–3515, 3524–3552, 3561–3589, 3598–3626, 3635–3663, 3672–3700, 3709–3737, 3746–3774, 3783–3811, 3820–3848, 3867–3894, 3895–3921, 3931–3958, 3968–3995, and 4005–4032. 7 stretches are compositionally biased toward basic and acidic residues: residues 2980 to 2996, 3017 to 3051, 3061 to 3075, 3087 to 3116, 3156 to 3168, 3175 to 3208, and 3226 to 3248; these read SVKDEHDKAESRRESIA, SQKDEKSTLASKEASRRESVVESSKDDAEKSESRP, VPRESKSPLDSKDTS, EDEKSEQQSRRESVAESVKADTKKDGKSQE, PMDKADKSKEPSR, SIKHENTKDEESPLGSRRDSVAESIKSDITKGEK, and IKDEKAESRRESVAESVKPESSK. Residues Ser3067, Ser3071, and Ser3075 each carry the phosphoserine modification. The span at 3300-3310 shows a compositional bias: basic and acidic residues; it reads SRPESEAESLK. The span at 3316–3327 shows a compositional bias: polar residues; it reads SQETSRPESVTE. Composition is skewed to basic and acidic residues over residues 3350-3363, 3373-3399, 3419-3431, 3448-3465, 3484-3502, 3521-3539, 3558-3576, 3599-3613, 3632-3650, 3669-3687, 3710-3724, 3743-3761, 3780-3798, and 3817-3835; these read NAKDSADESKEQRP, SIKDEKSPLASKDEAEKSKEESRRESV, SVKDEAEKSKEES, VKDEAEKSKEESRRESVA, SVKDEADKSKEESRRESGA, SIKDEAEKSKEESRRESVA, SVKDEAEKSKEESRRDSVA, EAEKSKEESRRESVA, SVKDEAEKSKEESSRDSVA, SVKDDAEKSKEESRRESVA, and SVKDEAEKSKEESRRESVA. The span at 3836-3850 shows a compositional bias: low complexity; it reads EKSSLASKKASRPAS. 8 stretches are compositionally biased toward basic and acidic residues: residues 3854–3872, 3891–3909, 3928–3946, 3965–3983, 4002–4020, 4039–4066, 4086–4095, and 4115–4141; these read SVKDEAEKSKEESRRESVA, SVKDEADKSKEESRRESGA, SVKDETEKSKEESRRESVT, SIKDEAEGTKQESRRESMPESGKAESIK, SVKDETEKPE, and AKDEKSPLHSRPESVADKSPDASKEAS. Composition is skewed to polar residues over residues 4142-4152 and 4214-4223; these read RSLSVAETASS and QPDTGHTAST. Composition is skewed to basic and acidic residues over residues 4362–4379, 4386–4410, and 4419–4432; these read IIPDFDERQLEEKLKSTA, DKSTRDEKSLEISVKVEIESEKSSP, and IEEKDKIEQSEKAQ. A compositionally biased stretch (low complexity) spans 4443 to 4461; it reads PESVASQPESVPSPSQSAA. A compositionally biased stretch (basic and acidic residues) spans 4462-4481; the sequence is SHEHKEVELSESHKAEKSSR. The span at 4498-4508 shows a compositional bias: polar residues; that stretch reads RPASSTSQFST. Low complexity predominate over residues 4517 to 4528; that stretch reads ESLLHSLTTTET. The span at 4529-4539 shows a compositional bias: basic and acidic residues; sequence VETKQMEEKSS. Over residues 4540-4560 the composition is skewed to low complexity; sequence FESVSTSVTKSTVLSSQSTVQ. Composition is skewed to basic and acidic residues over residues 4575–4584 and 4639–4650; these read KVEDSSRRES and SNKEIKDARETK. Composition is skewed to low complexity over residues 4651–4662 and 4703–4714; these read VTSQFTTTTSSA and TTASAVSSTSAS. Over residues 4744–4754 the composition is skewed to acidic residues; the sequence is PEDEEPADDVD. Basic and acidic residues-rich tracts occupy residues 4755-4764 and 4788-4798; these read ERSSVKESRS and LVEEEHEHVEE. The span at 4804-4829 shows a compositional bias: low complexity; it reads TSTSKTTTLLQSSEQSSTTTSSTSKT. Polar residues predominate over residues 4835-4851; that stretch reads ESITLTQMDQQTSQSQG. Residues 4875–4905 show a composition bias toward low complexity; that stretch reads GSAGSVIGAGAGAVAAGGKCESSAASIVSSS. The segment covering 4915 to 4930 has biased composition (polar residues); it reads GKSSPGALTSESQSIP. Ser4950 is modified (phosphoserine; by GSK3-beta). Residues 4955-4970 are compositionally biased toward basic and acidic residues; it reads VSKDELKSLEMQHHSQ. Over residues 5101–5112 the composition is skewed to polar residues; that stretch reads SYELQHSSSGVS. Residues 5185-5196 are compositionally biased toward low complexity; the sequence is SQSSESVESSSQ.

As to quaternary structure, heterodimer of a heavy and a light chain. Interacts with Fmr1. Found in a complex with tubulin and Futsch. Post-translationally, several minor light chains can be created with markedly different pIs. In terms of processing, phosphorylated by SGG/GSK3. Phosphorylated by LRRK2 at the presynapse of neuromuscular junctions, which negatively regulates the activity controlling synaptic differentiation. As to expression, neuronal cells within the PNS and CNS.

It is found in the cytoplasm. The protein localises to the cytoskeleton. In terms of biological role, during embryogenesis, necessary for dendritic and axonal organization and growth at the neuromuscular junction through the regulation of the synaptic microtubule cytoskeleton. Microtubule hairpin loops are found within a small subset of synaptic boutons at the neuromuscular synapse, these loops are stabilized by futsch. Loop morphology and dynamics suggest that rearrangement of these microtubule-based loops is a critical component of the process of bouton division and for subsequent nerve-terminal growth and branching. Translation is repressed by Fmr1. Together with ringer, required for neuromuscular junction (NMJ) bouton growth by regulating synaptic microtubules. Function with ringer in maintaining microtubule stability and dynamics, is essential for promoting axon regeneration in response to peripheral (PNS) and central nervous system (CNS) injury. In response to axotomy, acts downstream of a stress response cascade involving Xbp1 splicing, to control axon regeneration. The polypeptide is Microtubule-associated protein futsch (futsch) (Drosophila melanogaster (Fruit fly)).